Reading from the N-terminus, the 79-residue chain is Endothelin-2 (79 aa).

Residues 1-23 (PEQTAPYGLGNPPRRRRRSLPRR) form a disordered region. An endothelin-like region spans residues 24–39 (CQCSSARDPSCATFCL). A disordered region spans residues 51–79 (SRKSPADVFQTGKTGATRGELLQRLRDIS).

It belongs to the endothelin/sarafotoxin family.

It localises to the secreted. Endothelins are endothelium-derived vasoconstrictor peptides. The polypeptide is Endothelin-2 (EDN2) (Macaca fascicularis (Crab-eating macaque)).